A 237-amino-acid polypeptide reads, in one-letter code: rRNA-processing protein EFG1 (237 aa).

Residues 1 to 24 (MPKTVKNPKNNKSRSRGAPIQVAE) are disordered. Coiled-coil stretches lie at residues 53–113 (DKKI…ISQT) and 166–186 (LKIT…LMEE). The interval 206–237 (NDKTQKAVLTEEIDAPEQKQDEQQEEQDDFFE) is disordered. A compositionally biased stretch (acidic residues) spans 228 to 237 (QQEEQDDFFE).

It belongs to the EFG1 family.

Its subcellular location is the nucleus. It is found in the nucleolus. Its function is as follows. Involved in rRNA processing. This Candida albicans (strain SC5314 / ATCC MYA-2876) (Yeast) protein is rRNA-processing protein EFG1.